Reading from the N-terminus, the 543-residue chain is Proline--tRNA ligase, chloroplastic/mitochondrial (543 aa).

Positions 41–63 are disordered; that stretch reads ATAPSGTASPETKSSEVDRLRSD. Residues 53-63 show a composition bias toward basic and acidic residues; sequence KSSEVDRLRSD.

The protein belongs to the class-II aminoacyl-tRNA synthetase family.

Its subcellular location is the plastid. It localises to the chloroplast. The protein localises to the mitochondrion. The catalysed reaction is tRNA(Pro) + L-proline + ATP = L-prolyl-tRNA(Pro) + AMP + diphosphate. Catalyzes the attachment of proline to tRNA(Pro) in a two-step reaction: proline is first activated by ATP to form Pro-AMP and then transferred to the acceptor end of tRNA(Pro). This Arabidopsis thaliana (Mouse-ear cress) protein is Proline--tRNA ligase, chloroplastic/mitochondrial.